Reading from the N-terminus, the 366-residue chain is GTPase Obg (366 aa).

Residues 1–159 (MKFLDEAKVY…KTIWLRLKLI (159 aa)) form the Obg domain. An OBG-type G domain is found at 160–327 (ADAGLVGLPN…VLRALRDVIV (168 aa)). Residues 166 to 173 (GLPNAGKS), 191 to 195 (FTTLH), 212 to 215 (DIPG), 279 to 282 (SQID), and 308 to 310 (SAI) each bind GTP. Residues Ser-173 and Thr-193 each contribute to the Mg(2+) site. Residues 333-366 (DDETISQRPKKHRHKLEDRPQHENGPEESEEGEE) are disordered. Residues 347–357 (KLEDRPQHENG) are compositionally biased toward basic and acidic residues.

Belongs to the TRAFAC class OBG-HflX-like GTPase superfamily. OBG GTPase family. In terms of assembly, monomer. The cofactor is Mg(2+).

The protein resides in the cytoplasm. Its function is as follows. An essential GTPase which binds GTP, GDP and possibly (p)ppGpp with moderate affinity, with high nucleotide exchange rates and a fairly low GTP hydrolysis rate. Plays a role in control of the cell cycle, stress response, ribosome biogenesis and in those bacteria that undergo differentiation, in morphogenesis control. In Allorhizobium ampelinum (strain ATCC BAA-846 / DSM 112012 / S4) (Agrobacterium vitis (strain S4)), this protein is GTPase Obg.